We begin with the raw amino-acid sequence, 338 residues long: Decarboxylase macB (338 aa).

Zn(2+) contacts are provided by H7, H9, H159, and D283.

The protein belongs to the metallo-dependent hydrolases superfamily. ACMSD family.

The catalysed reaction is 6-methylsalicylate + H(+) = 3-methylphenol + CO2. Its pathway is secondary metabolite biosynthesis; terpenoid biosynthesis. Its function is as follows. Decarboxylase; part of the gene cluster that mediates the biosynthesis of macrophorins, isoprenoid epoxycyclohexenones containing cyclized drimane moieties. The first step of the pathway is the synthesis of 6-methylsalicylic acid (6-MSA) by the polyketide synthase macA. 6-MSA is then converted to m-cresol by the decarboxylase macB. The cytochrome P450 monooxygenase macC then catalyzes the oxidation of m-cresol to toluquinol. Epoxidation of toluquinol is then performed by the short chain dehydrogenase macD, with the help of macE, and a further prenylation by macG leads to 7-deacetoxyyanuthone A. The next step is the hydroxylation of C-22 of 7-deacetoxyyanuthone A by the cytochrome P450 monooxygenase macH to yield 22-deacetylyanuthone A. O-Mevalon transferase macI then attaches mevalon to the hydroxyl group of 22-deacetylyanuthone A to produce yanuthone E. The terpene cyclase macJ catalyzes the cyclization of 22-deacetylyanuthone A to macrophorin A. MacJ is also able to catalyze cyclization of yanuthone E and 7-deacetoxyyanuthone A to their corresponding macrophorins. The macJ products can be further modified by macH and macJ, as well as by the FAD-dependent monooxygenase macF, to produce additional macrophorins, including 4'-oxomacrophorin A, 4'-oxomacrophorin D and 4'-oxomacrophorin E. This chain is Decarboxylase macB, found in Penicillium terrestre.